Consider the following 264-residue polypeptide: 3-methyl-2-oxobutanoate hydroxymethyltransferase (264 aa).

Mg(2+) contacts are provided by Asp45 and Asp84. 3-methyl-2-oxobutanoate is bound by residues 45–46 (DS), Asp84, and Lys112. Residue Glu114 participates in Mg(2+) binding. Residue Glu181 is the Proton acceptor of the active site.

It belongs to the PanB family. Homodecamer; pentamer of dimers. Requires Mg(2+) as cofactor.

It localises to the cytoplasm. It carries out the reaction 3-methyl-2-oxobutanoate + (6R)-5,10-methylene-5,6,7,8-tetrahydrofolate + H2O = 2-dehydropantoate + (6S)-5,6,7,8-tetrahydrofolate. It participates in cofactor biosynthesis; (R)-pantothenate biosynthesis; (R)-pantoate from 3-methyl-2-oxobutanoate: step 1/2. In terms of biological role, catalyzes the reversible reaction in which hydroxymethyl group from 5,10-methylenetetrahydrofolate is transferred onto alpha-ketoisovalerate to form ketopantoate. This Shewanella sp. (strain ANA-3) protein is 3-methyl-2-oxobutanoate hydroxymethyltransferase.